A 757-amino-acid chain; its full sequence is MDVNPTLLFLKVPAQNAISTTFPYTGDPPYSHGTGTGYTMDTVNRTHQYSERGRWTKNTETGAPQLNPIDGPLPEDNEPSGYAQTDCVLEAMAFLEESHPGIFENSCIETMEVVQQTRVDKLTQGRQTYDWTLNRNQPAATALANTIEVFRSNGLIANESGRLIDFLKDVMESMDRDEVEVTTHFQRKRRVRDNVTKKMVTQRTIGKKKHKLDKRSYLIRALTLNTMTKDAERGKLKRRAIATPGMQIRGFVYFVETLARSICEKLEQSGLPVGGNEKKAKLANVVRKMMTNSQDTEISFTITGDNTKWNENQNPRMFLAMITYITKNQPEWFRNILSIAPIMFSNKMARLGKGYMFESKSMKLRTQIPAEMLANIDLKYFNDSTKKKIEKIRPLLIDGTASLSPGMMMGMFNMLSTVLGVSILNLGQKRYTKTTYWWDGLQSSDDFALIVNAPNYAGIQAGVDRFYRTCKLLGINMSKKKSYINRTGTFEFTSFFYRYGFVANFSMELPSFGVSGVNESADMSIGVTVIKNNMINNDLGPATAQMALQLFIKDYRYTYRCHRGDTQIQTRRSFEIKKLWDQTRSKAGLLVSDGGPNLYNIRNLHIPEVCLKWELMDEDYQGRLCNPLNPFVSHKEIESVNNAVIMPAHGPAKNMEYDAVATTHSWVPKRNRSILNTSQRGVLEDEQMYQRCCNLFEKFFPSSSYRRPVGISSMVEAMVSRARIDARIDFESGRIKKEEFAEIMKICSTIEDLRRQK.

A disordered region spans residues 50–82 (SERGRWTKNTETGAPQLNPIDGPLPEDNEPSGY). 2 short sequence motifs (nuclear localization signal) span residues 187–195 (RKRRVRDNV) and 203–216 (RTIGKKKHKLDKRS). Positions 249–256 (RGFVYFVE) are promoter-binding site. The RdRp catalytic domain maps to 286–483 (VRKMMTNSQD…GINMSKKKSY (198 aa)).

It belongs to the influenza viruses polymerase PB1 family. In terms of assembly, influenza RNA polymerase is composed of three subunits: PB1, PB2 and PA. Interacts (via N-terminus) with PA (via C-terminus). Interacts (via C-terminus) with PB2 (via N-terminus); this interaction is essential for transcription initiation. Interacts (via C-terminus) with human PKP2 (via N-terminus); the interaction competitively inhibits the interaction between the RNA polymerase subunits PB1 and PB2. In terms of processing, phosphorylated by host PRKCA.

The protein resides in the host nucleus. The protein localises to the host cytoplasm. The enzyme catalyses RNA(n) + a ribonucleoside 5'-triphosphate = RNA(n+1) + diphosphate. Functionally, RNA-dependent RNA polymerase which is responsible for replication and transcription of virus RNA segments. The transcription of viral mRNAs occurs by a unique mechanism called cap-snatching. 5' methylated caps of cellular mRNAs are cleaved after 10-13 nucleotides by PA. In turn, these short capped RNAs are used as primers by PB1 for transcription of viral mRNAs. During virus replication, PB1 initiates RNA synthesis and copy vRNA into complementary RNA (cRNA) which in turn serves as a template for the production of more vRNAs. The sequence is that of RNA-directed RNA polymerase catalytic subunit from Aves (Human).